A 395-amino-acid polypeptide reads, in one-letter code: Chorismate synthase (395 aa).

It belongs to the chorismate synthase family. Homotetramer. The cofactor is FMNH2.

The catalysed reaction is 5-O-(1-carboxyvinyl)-3-phosphoshikimate = chorismate + phosphate. Its pathway is metabolic intermediate biosynthesis; chorismate biosynthesis; chorismate from D-erythrose 4-phosphate and phosphoenolpyruvate: step 7/7. The sequence is that of Chorismate synthase from Schizosaccharomyces pombe (strain 972 / ATCC 24843) (Fission yeast).